The sequence spans 341 residues: tRNA N6-adenosine threonylcarbamoyltransferase (341 aa).

The Fe cation site is built by histidine 111 and histidine 115. Residues leucine 134–glycine 138, aspartate 167, glycine 180, and asparagine 270 each bind substrate. Aspartate 298 contributes to the Fe cation binding site.

The protein belongs to the KAE1 / TsaD family. Fe(2+) serves as cofactor.

It localises to the cytoplasm. The enzyme catalyses L-threonylcarbamoyladenylate + adenosine(37) in tRNA = N(6)-L-threonylcarbamoyladenosine(37) in tRNA + AMP + H(+). In terms of biological role, required for the formation of a threonylcarbamoyl group on adenosine at position 37 (t(6)A37) in tRNAs that read codons beginning with adenine. Is involved in the transfer of the threonylcarbamoyl moiety of threonylcarbamoyl-AMP (TC-AMP) to the N6 group of A37, together with TsaE and TsaB. TsaD likely plays a direct catalytic role in this reaction. This chain is tRNA N6-adenosine threonylcarbamoyltransferase, found in Thiobacillus denitrificans (strain ATCC 25259 / T1).